Here is a 67-residue protein sequence, read N- to C-terminus: Large ribosomal subunit protein bL35 (67 aa).

It belongs to the bacterial ribosomal protein bL35 family.

This chain is Large ribosomal subunit protein bL35, found in Synechocystis sp. (strain ATCC 27184 / PCC 6803 / Kazusa).